The following is a 205-amino-acid chain: High frequency lysogenization protein HflD homolog (205 aa).

Belongs to the HflD family.

It localises to the cytoplasm. The protein resides in the cell inner membrane. The sequence is that of High frequency lysogenization protein HflD homolog from Vibrio vulnificus (strain CMCP6).